A 234-amino-acid polypeptide reads, in one-letter code: 2-C-methyl-D-erythritol 4-phosphate cytidylyltransferase (234 aa).

It belongs to the IspD/TarI cytidylyltransferase family. IspD subfamily.

It carries out the reaction 2-C-methyl-D-erythritol 4-phosphate + CTP + H(+) = 4-CDP-2-C-methyl-D-erythritol + diphosphate. It participates in isoprenoid biosynthesis; isopentenyl diphosphate biosynthesis via DXP pathway; isopentenyl diphosphate from 1-deoxy-D-xylulose 5-phosphate: step 2/6. Its function is as follows. Catalyzes the formation of 4-diphosphocytidyl-2-C-methyl-D-erythritol from CTP and 2-C-methyl-D-erythritol 4-phosphate (MEP). The protein is 2-C-methyl-D-erythritol 4-phosphate cytidylyltransferase of Pseudomonas aeruginosa (strain UCBPP-PA14).